A 130-amino-acid chain; its full sequence is Nascent polypeptide-associated complex protein (130 aa).

The 69-residue stretch at 6–74 folds into the NAC-A/B domain; sequence GMNPRKMQQM…PVERDAADAI (69 aa). Residues 65-91 are disordered; it reads PVERDAADAIEAAPADDSDDTDDDDAI. Residues 78-90 show a composition bias toward acidic residues; sequence PADDSDDTDDDDA.

It belongs to the NAC-alpha family. As to quaternary structure, homodimer. Interacts with the ribosome. Binds ribosomal RNA.

In terms of biological role, contacts the emerging nascent chain on the ribosome. The protein is Nascent polypeptide-associated complex protein of Halobacterium salinarum (strain ATCC 700922 / JCM 11081 / NRC-1) (Halobacterium halobium).